Consider the following 399-residue polypeptide: Elongation factor Tu (399 aa).

The tr-type G domain maps to 10–209 (KPHVNIGTIG…AVDSYIPTPV (200 aa)). The interval 19–26 (GHVDHGKT) is G1. Residue 19 to 26 (GHVDHGKT) participates in GTP binding. Residue Thr26 participates in Mg(2+) binding. The G2 stretch occupies residues 60 to 64 (GITIA). Positions 81–84 (DCPG) are G3. Residues 81–85 (DCPGH) and 136–139 (NKAD) contribute to the GTP site. Residues 136–139 (NKAD) are G4. The G5 stretch occupies residues 174–176 (SAL).

The protein belongs to the TRAFAC class translation factor GTPase superfamily. Classic translation factor GTPase family. EF-Tu/EF-1A subfamily. In terms of assembly, monomer.

It is found in the cytoplasm. The enzyme catalyses GTP + H2O = GDP + phosphate + H(+). Its function is as follows. GTP hydrolase that promotes the GTP-dependent binding of aminoacyl-tRNA to the A-site of ribosomes during protein biosynthesis. This Campylobacter concisus (strain 13826) protein is Elongation factor Tu.